A 308-amino-acid chain; its full sequence is ADP-L-glycero-D-manno-heptose-6-epimerase (308 aa).

Residues 10-11, 31-32, K38, K53, 75-79, and N92 contribute to the NADP(+) site; these read FI, DN, and EGACS. Y139 serves as the catalytic Proton acceptor. Residue K143 coordinates NADP(+). Residue N168 participates in substrate binding. NADP(+) contacts are provided by V169 and K177. K177 serves as the catalytic Proton acceptor. Substrate is bound by residues S179, H186, 200 to 203, R208, and Y271; that span reads FAGS.

The protein belongs to the NAD(P)-dependent epimerase/dehydratase family. HldD subfamily. Homopentamer. It depends on NADP(+) as a cofactor.

It carries out the reaction ADP-D-glycero-beta-D-manno-heptose = ADP-L-glycero-beta-D-manno-heptose. It participates in nucleotide-sugar biosynthesis; ADP-L-glycero-beta-D-manno-heptose biosynthesis; ADP-L-glycero-beta-D-manno-heptose from D-glycero-beta-D-manno-heptose 7-phosphate: step 4/4. The protein operates within bacterial outer membrane biogenesis; LOS core biosynthesis. Functionally, catalyzes the interconversion between ADP-D-glycero-beta-D-manno-heptose and ADP-L-glycero-beta-D-manno-heptose via an epimerization at carbon 6 of the heptose. The polypeptide is ADP-L-glycero-D-manno-heptose-6-epimerase (Haemophilus influenzae (strain ATCC 51907 / DSM 11121 / KW20 / Rd)).